The sequence spans 119 residues: Large ribosomal subunit protein uL18 (119 aa).

The protein belongs to the universal ribosomal protein uL18 family. As to quaternary structure, part of the 50S ribosomal subunit; part of the 5S rRNA/L5/L18/L25 subcomplex. Contacts the 5S and 23S rRNAs.

Its function is as follows. This is one of the proteins that bind and probably mediate the attachment of the 5S RNA into the large ribosomal subunit, where it forms part of the central protuberance. The chain is Large ribosomal subunit protein uL18 from Xanthomonas oryzae pv. oryzae (strain MAFF 311018).